The primary structure comprises 158 residues: C-type lectin BiL (158 aa).

An N-terminal signal peptide occupies residues 1-23; it reads MGRFIFVSFGLLVVFLSLSGAKG. Cystine bridges form between Cys26–Cys37, Cys54–Cys154, Cys61–Cys156, and Cys129–Cys146. One can recognise a C-type lectin domain in the interval 33-155; sequence MNGLCYKIFD…CESKNAFLCQ (123 aa). Gln119, Asp121, Glu127, Asn142, and Asp143 together coordinate Ca(2+). A Galactose-binding motif is present at residues 119 to 121; it reads QPD.

Homodimer; disulfide-linked. Expressed by the venom gland.

The protein localises to the secreted. Lectin with a hemagglutinating activity that is inhibited by galactose, lactose and EDTA. Is calcium-dependent. Shows effects on the renal function of isolated perfused rat kidneys by increasing both perfusion pressure (PP) and renal vascular resistance (RVR). In addition, the urinary flow and glomerular filtration rate (GFR) decreases significantly. The changes observed may reflect direct injury to the glomerular and tubular renal cells, and the rise in permeability in the glomerular endothelial cells, may be the effect of interactions of C-type lectin with endothelial cells or due to release of other mediators by mesangial, tubular and endothelial cells. This chain is C-type lectin BiL, found in Bothrops insularis (Golden lancehead).